We begin with the raw amino-acid sequence, 79 residues long: Immunity protein CdiI (79 aa).

2 helical membrane passes run 12-32 and 51-71; these read IIFFPMLCTVLGLLGIPIGLI and VVLFTLKIGIPIGFILGLGLW.

In terms of assembly, probably interacts with cognate toxin CdiA.

Its subcellular location is the cell inner membrane. Functionally, immunity protein component of a toxin-immunity protein module, which functions as a cellular contact-dependent growth inhibition (CDI) system. CDI modules allow bacteria to communicate with and inhibit the growth of closely related neighboring bacteria in a contact-dependent fashion. Protects cells against CdiA from the same strain, its cognate toxin protein. Growth inhibition is reversible upon induction of this protein, occurring about 2.5 hours after induction, and requires an energy source. Does not protect against non-cognate CdiA from E.coli strain 563 / UPEC, D.dadantii strain 3937 or Y.pestis strain CO92. The chain is Immunity protein CdiI from Escherichia coli.